Reading from the N-terminus, the 354-residue chain is Probable L-ascorbate-6-phosphate lactonase UlaG (354 aa).

It belongs to the UlaG family. A divalent metal cation serves as cofactor.

The protein localises to the cytoplasm. It carries out the reaction L-ascorbate 6-phosphate + H2O = 3-dehydro-L-gulonate 6-phosphate. It participates in cofactor degradation; L-ascorbate degradation; D-xylulose 5-phosphate from L-ascorbate: step 1/4. In terms of biological role, probably catalyzes the hydrolysis of L-ascorbate-6-P into 3-keto-L-gulonate-6-P. Is essential for L-ascorbate utilization under anaerobic conditions. In Salmonella agona (strain SL483), this protein is Probable L-ascorbate-6-phosphate lactonase UlaG.